Consider the following 391-residue polypeptide: uncharacterized protein (391 aa).

A compositionally biased stretch (low complexity) spans 118 to 149 (SINSLPPTTTTTTTTTTTTTIPNNNNNITLSP). Disordered regions lie at residues 118 to 162 (SINS…HQHP), 184 to 258 (QTNV…TPRN), 272 to 327 (NNNL…NNLN), and 337 to 356 (LNLN…NNNN). Residues 150-162 (QHHHGQQQHHQHP) show a composition bias toward basic residues. Residues 186 to 211 (NVNNNNNNNNNNNNNNNSNNNNNNNN) show a composition bias toward low complexity. The span at 212–223 (DFSTPNSFSVPT) shows a compositional bias: polar residues. Positions 244–256 (NTPNNSTSNPTTP) are enriched in low complexity.

This is an uncharacterized protein from Dictyostelium discoideum (Social amoeba).